We begin with the raw amino-acid sequence, 108 residues long: MAMKKANKLTQTAMIKQILKRCSSLGKKQSNVYGEDENGSPLNVPKGHFVVYVGENRVRYVVPISFLTRPEFQLLLQQAEEEFGFDHDMGLTIPCEEVVFRSLTSMLR.

The protein belongs to the ARG7 family. As to expression, expressed in organ primordia. Hardly observed in leaves.

The protein localises to the cell membrane. Provide a mechanistic link between auxin and plasma membrane H(+)-ATPases (PM H(+)-ATPases, e.g. AHA1 and AHA2), and triggers PM H(+)-ATPases activity by promoting phosphorylation of their C-terminal autoinhibitory domain as a result of PP2C-D subfamily of type 2C phosphatases inhibition, thus leading to the acidification of the apoplast and the facilitation of solutes and water uptake to drive cell expansion. Triggers plant growth probably by promoting cell elongation. Regulates branch angles and bending. The chain is Protein SMALL AUXIN UP-REGULATED RNA 51 from Arabidopsis thaliana (Mouse-ear cress).